Here is a 211-residue protein sequence, read N- to C-terminus: Small ribosomal subunit protein uS4 (211 aa).

An S4 RNA-binding domain is found at 98–161 (RRLDNVVYRL…RDIPFIKENL (64 aa)).

This sequence belongs to the universal ribosomal protein uS4 family. Part of the 30S ribosomal subunit. Contacts protein S5. The interaction surface between S4 and S5 is involved in control of translational fidelity.

In terms of biological role, one of the primary rRNA binding proteins, it binds directly to 16S rRNA where it nucleates assembly of the body of the 30S subunit. With S5 and S12 plays an important role in translational accuracy. This Aquifex aeolicus (strain VF5) protein is Small ribosomal subunit protein uS4.